Consider the following 387-residue polypeptide: MAVSVTPIRDTKWLTLEVCREFQRGTCSRPDTECKFAHPSKSCQVENGRVIACFDSLKGRCSRENCKYLHPPPHLKTQLEINGRNNLIQQKNMAMLAQQMQLANAMMPGAPLQPVPMFSVAPSLATNASAAFNPYLGPVSPSLVPAEILPTAPMLVTGNPGVPVPAAAAAAAQKLMRTDRLEVCREYQRGNCNRGENDCRFAHPADSTMIDTNDNTVTVCMDYIKGRCSREKCKYFHPPAHLQAKIKAAQYQVNQAAAAQAAATAAAMTQSAVKSLKRPLEATFDLGIPQAVLPPLPKRPALEKTNGATAVFNTGIFQYQQALANMQLQQHTAFLPPVPMVHGATPATVSAATTSATSVPFAATATANQIPIISAEHLTSHKYVTQM.

Phosphothreonine is present on Thr-6. C3H1-type zinc fingers lie at residues 13–41, 47–73, 178–206, and 214–240; these read WLTLEVCREFQRGTCSRPDTECKFAHPSK, NGRVIACFDSLKGRCSRENCKYLHPPP, TDRLEVCREYQRGNCNRGENDCRFAHPAD, and DNTVTVCMDYIKGRCSREKCKYFHPPA.

It belongs to the muscleblind family. As to quaternary structure, interacts with DDX1 and YBX1. Interacts with HNRNPH1; the interaction in RNA-independent. Interacts with RBPMS; the interaction allows cooperative assembly of RNA-bound stable cell-specific alternative splicing regulatory complexes.

The protein resides in the nucleus. It is found in the cytoplasm. It localises to the cytoplasmic granule. In terms of biological role, mediates pre-mRNA alternative splicing regulation. Acts either as activator or repressor of splicing on specific pre-mRNA targets. Inhibits cardiac troponin-T (TNNT2) pre-mRNA exon inclusion but induces insulin receptor (IR) pre-mRNA exon inclusion in muscle. Antagonizes the alternative splicing activity pattern of CELF proteins. Regulates the TNNT2 exon 5 skipping through competition with U2AF2. Inhibits the formation of the spliceosome A complex on intron 4 of TNNT2 pre-mRNA. Binds to the stem-loop structure within the polypyrimidine tract of TNNT2 intron 4 during spliceosome assembly. Binds to the 5'-YGCU(U/G)Y-3'consensus sequence. Binds to the IR RNA. Binds to expanded CUG repeat RNA, which folds into a hairpin structure containing GC base pairs and bulged, unpaired U residues. Together with RNA binding proteins RBPMS and RBFOX2, activates vascular smooth muscle cells alternative splicing events. Regulates NCOR2 alternative splicing. This Rattus norvegicus (Rat) protein is Muscleblind-like protein 1.